An 838-amino-acid chain; its full sequence is Protein P (838 aa).

The segment at 1–177 (MPLSYQHFRK…FCGSPYSWEQ (177 aa)) is terminal protein domain (TP). Residues 178-341 (ELQHQTSTRH…YCLTHIVNLL (164 aa)) are spacer. Disordered stretches follow at residues 215–238 (QSRL…SGSI) and 285–311 (STSK…RSQS). Over residues 285-294 (STSKRQSSSG) the composition is skewed to polar residues. The polymerase/reverse transcriptase domain (RT) stretch occupies residues 342–685 (EDWGPCTEHG…YLHLYPVARQ (344 aa)). One can recognise a Reverse transcriptase domain in the interval 352–595 (EHNIRIPRTP…YSLNFMGYVI (244 aa)). Positions 424, 546, and 547 each coordinate Mg(2+).

It belongs to the hepadnaviridae P protein family.

The enzyme catalyses DNA(n) + a 2'-deoxyribonucleoside 5'-triphosphate = DNA(n+1) + diphosphate. It carries out the reaction Endonucleolytic cleavage to 5'-phosphomonoester.. Activated by host HSP70 and HSP40 in vitro to be able to bind the epsilon loop of the pgRNA. Because deletion of the RNase H region renders the protein partly chaperone-independent, the chaperones may be needed indirectly to relieve occlusion of the RNA-binding site by this domain. Inhibited by several reverse-transcriptase inhibitors: Lamivudine, Adefovir and Entecavir. Its function is as follows. Multifunctional enzyme that converts the viral RNA genome into dsDNA in viral cytoplasmic capsids. This enzyme displays a DNA polymerase activity that can copy either DNA or RNA templates, and a ribonuclease H (RNase H) activity that cleaves the RNA strand of RNA-DNA heteroduplexes in a partially processive 3'- to 5'-endonucleasic mode. Neo-synthesized pregenomic RNA (pgRNA) are encapsidated together with the P protein, and reverse-transcribed inside the nucleocapsid. Initiation of reverse-transcription occurs first by binding the epsilon loop on the pgRNA genome, and is initiated by protein priming, thereby the 5'-end of (-)DNA is covalently linked to P protein. Partial (+)DNA is synthesized from the (-)DNA template and generates the relaxed circular DNA (RC-DNA) genome. After budding and infection, the RC-DNA migrates in the nucleus, and is converted into a plasmid-like covalently closed circular DNA (cccDNA). The activity of P protein does not seem to be necessary for cccDNA generation, and is presumably released from (+)DNA by host nuclear DNA repair machinery. This chain is Protein P, found in Homo sapiens (Human).